The following is a 218-amino-acid chain: ATP-dependent Clp protease proteolytic subunit 2 (218 aa).

S114 (nucleophile) is an active-site residue. Residue H139 is part of the active site.

Belongs to the peptidase S14 family. As to quaternary structure, fourteen ClpP subunits assemble into 2 heptameric rings which stack back to back to give a disk-like structure with a central cavity, resembling the structure of eukaryotic proteasomes.

It is found in the cytoplasm. The enzyme catalyses Hydrolysis of proteins to small peptides in the presence of ATP and magnesium. alpha-casein is the usual test substrate. In the absence of ATP, only oligopeptides shorter than five residues are hydrolyzed (such as succinyl-Leu-Tyr-|-NHMec, and Leu-Tyr-Leu-|-Tyr-Trp, in which cleavage of the -Tyr-|-Leu- and -Tyr-|-Trp bonds also occurs).. In terms of biological role, cleaves peptides in various proteins in a process that requires ATP hydrolysis. Has a chymotrypsin-like activity. Plays a major role in the degradation of misfolded proteins. Probably partially responsible for degradation of ECF sigma factor SigR prime. This chain is ATP-dependent Clp protease proteolytic subunit 2, found in Streptomyces coelicolor (strain ATCC BAA-471 / A3(2) / M145).